Reading from the N-terminus, the 558-residue chain is Ceramide kinase-like protein (558 aa).

Positions 1-36 are disordered; it reads MPWRRRRNRVSALEGGREEEAPPEAAAVPPALLTSP. 2 consecutive short sequence motifs (nuclear localization signal) follow at residues 2–9 and 102–106; these read PWRRRRNR and KLKRR. The DAGKc domain maps to 164-339; that stretch reads NRPKSLKILL…VDVCTFSTAG (176 aa).

Phosphorylated on serine residues. As to expression, isoform 1 and isoform 2 are expressed in adult retina, liver and pancreas as well as in fetal brain, lung and kidney. Isoform 3 is expressed in adult retina as well as in fetal lung and liver. Isoform 4 is expressed in adult retina, lung and kidney as well as in fetal lung and liver. Moderately expressed in retina, kidney, lung, testis, trachea, and pancreas. Weakly expressed in brain, placenta and liver.

Its subcellular location is the cytoplasm. It is found in the nucleus. The protein localises to the nucleolus. The protein resides in the golgi apparatus. It localises to the trans-Golgi network. Its subcellular location is the endoplasmic reticulum. Its function is as follows. Has no detectable ceramide-kinase activity. Overexpression of CERKL protects cells from apoptosis in oxidative stress conditions. The chain is Ceramide kinase-like protein (CERKL) from Homo sapiens (Human).